A 29-amino-acid polypeptide reads, in one-letter code: Lambda-theraphotoxin-Ec2a (29 aa).

3 disulfides stabilise this stretch: Cys2–Cys16, Cys9–Cys21, and Cys15–Cys25.

It belongs to the neurotoxin 30 (phrixotoxin) family. Expressed by the venom gland.

The protein localises to the secreted. Functionally, insect-selective neurotoxin that potently blocks insect calcium-activated potassium (BKCa) channels (Slo-type) in cockroach dorsal unpaired median (DUM) neurons (IC(50)=3.7 nM). This occurs in the absence of any shifts in the voltage dependence of activation. At high concentrations (330 nM), it partially inhibits cockroach delayed-rectifier potassium channels (Kv) currents. May interact with the turret and/or loop region of the external entrance to the channel and does not project deeply into the pore of the channel. In vivo, does not show toxicity in mice after intracerebroventricular injection of up to 25 pmol/g (1.8 ug/20 g mouse). The sequence is that of Lambda-theraphotoxin-Ec2a from Eucratoscelus constrictus (African red-rump baboon spider).